The primary structure comprises 264 residues: tRNA pseudouridine synthase A (264 aa).

The Nucleophile role is filled by D51. A substrate-binding site is contributed by Y109.

Belongs to the tRNA pseudouridine synthase TruA family. As to quaternary structure, homodimer.

It carries out the reaction uridine(38/39/40) in tRNA = pseudouridine(38/39/40) in tRNA. In terms of biological role, formation of pseudouridine at positions 38, 39 and 40 in the anticodon stem and loop of transfer RNAs. The polypeptide is tRNA pseudouridine synthase A (Polaromonas sp. (strain JS666 / ATCC BAA-500)).